The chain runs to 230 residues: Phosphoenolpyruvate guanylyltransferase (230 aa).

Threonine 139, glycine 155, and serine 158 together coordinate phosphoenolpyruvate.

The protein belongs to the CofC family.

It carries out the reaction phosphoenolpyruvate + GTP + H(+) = enolpyruvoyl-2-diphospho-5'-guanosine + diphosphate. It participates in cofactor biosynthesis; coenzyme F420 biosynthesis. Functionally, guanylyltransferase that catalyzes the activation of phosphoenolpyruvate (PEP) as enolpyruvoyl-2-diphospho-5'-guanosine, via the condensation of PEP with GTP. It is involved in the biosynthesis of coenzyme F420, a hydride carrier cofactor. The protein is Phosphoenolpyruvate guanylyltransferase of Thermobaculum terrenum (strain ATCC BAA-798 / CCMEE 7001 / YNP1).